A 533-amino-acid polypeptide reads, in one-letter code: uncharacterized protein (533 aa).

The next 4 helical transmembrane spans lie at 1–21 (MLAFPYLMTMITPPTFDVAFI), 135–155 (LPRFLFGVFLSEQMIAAIAAL), 193–213 (AIAAGKVVVAIGSPPTKAILA), and 472–492 (LLVNDDFEASPGFCVIGPLVG).

It localises to the cell membrane. This is an uncharacterized protein from Mycobacterium bovis (strain ATCC BAA-935 / AF2122/97).